Consider the following 139-residue polypeptide: Antitoxin HicB 2 (139 aa).

An HTH cro/C1-type domain is found at 87–137 (MLQTRTSNAELARLLGTRPQEIQRIVSLSHSTKIDTIANALNALGKHLELV). A DNA-binding region (H-T-H motif) is located at residues 96–113 (ELARLLGTRPQEIQRIVS).

Belongs to the HicB antitoxin family. In terms of assembly, probably forms a complex with the probable mRNA interferase HicA2 (its cognate toxin); when complexed with HicA inhibits the toxin activity.

Antitoxin component of a type II toxin-antitoxin (TA) system. Functions as an mRNA interferase antitoxin preventing effects of the HicA 2 toxin. In Photorhabdus laumondii subsp. laumondii (strain DSM 15139 / CIP 105565 / TT01) (Photorhabdus luminescens subsp. laumondii), this protein is Antitoxin HicB 2 (hicB2).